The primary structure comprises 43 residues: METATLVAIFISGLLVSFTGYALYTAFGQPSEQLRDPFEEHGD.

Residues 7–27 traverse the membrane as a helical segment; that stretch reads VAIFISGLLVSFTGYALYTAF.

This sequence belongs to the PsbN family.

The protein resides in the plastid. It localises to the chloroplast thylakoid membrane. In terms of biological role, may play a role in photosystem I and II biogenesis. The protein is Protein PsbN of Sagittaria latifolia (Broadleaf arrowhead).